Here is a 1478-residue protein sequence, read N- to C-terminus: GTPase-activating protein and VPS9 domain-containing protein 1 (1478 aa).

The Ras-GAP domain maps to 147–385; it reads SYLLQVLRYL…AAFLDVVIGG (239 aa). Ser227 bears the Phosphoserine mark. Phosphothreonine is present on residues Thr390 and Thr458. Tyr460 bears the Phosphotyrosine mark. Position 466 is a phosphoserine (Ser466). Thr470 bears the Phosphothreonine mark. 2 positions are modified to phosphoserine: Ser566 and Ser569. Disordered stretches follow at residues 574–608, 739–820, and 846–874; these read GISEGPSNRSNSVSSLDLEGESVSELGAGPSGSNG, ESCS…PPSQ, and HYARPSHPPPDPPILEGAVGGNEARLPNF. Polar residues predominate over residues 578–588; it reads GPSNRSNSVSS. Ser742, Ser746, and Ser757 each carry phosphoserine. The segment covering 758–777 has biased composition (polar residues); that stretch reads SRPSTPGLSVVSGISATSED. Thr762 is modified (phosphothreonine). Residue Ser766 is modified to Phosphoserine. Residues 778 to 789 are compositionally biased toward basic and acidic residues; sequence IPNKIEDLRSEC. Ser876, Ser902, Ser903, Ser908, Ser914, and Ser966 each carry phosphoserine. The segment covering 889–902 has biased composition (basic and acidic residues); the sequence is QRHSYPERLVRSRS. Disordered regions lie at residues 889-1023 and 1043-1064; these read QRHS…PRLS and TSPSDGAMANYESTGDNHDRDL. Composition is skewed to basic and acidic residues over residues 954–975 and 997–1008; these read DSSRGETEERKDSDDEKSDRNR and EKQEKDKDDLGP. Residues 1012–1023 are compositionally biased toward polar residues; the sequence is STLTDDPSPRLS. Ser1019, Ser1046, Ser1096, and Ser1103 each carry phosphoserine. Residues 1338-1478 form the VPS9 domain; that stretch reads ILRDQVLHEH…EFIKTIDDRK (141 aa).

It belongs to the GAPVD1 family. In terms of assembly, interacts with TRIP10/CIP4. Interacts with RAB5A. As to quaternary structure, (Microbial infection) Interacts with P.falciparum (strain 3D7) CK1. Expressed in erythrocytes (at protein level).

The protein resides in the membrane. It localises to the endosome. In terms of biological role, acts both as a GTPase-activating protein (GAP) and a guanine nucleotide exchange factor (GEF), and participates in various processes such as endocytosis, insulin receptor internalization or LC2A4/GLUT4 trafficking. Acts as a GEF for the Ras-related protein RAB31 by exchanging bound GDP for free GTP, leading to regulate LC2A4/GLUT4 trafficking. In the absence of insulin, it maintains RAB31 in an active state and promotes a futile cycle between LC2A4/GLUT4 storage vesicles and early endosomes, retaining LC2A4/GLUT4 inside the cells. Upon insulin stimulation, it is translocated to the plasma membrane, releasing LC2A4/GLUT4 from intracellular storage vesicles. Also involved in EGFR trafficking and degradation, possibly by promoting EGFR ubiquitination and subsequent degradation by the proteasome. Has GEF activity for Rab5 and GAP activity for Ras. In Homo sapiens (Human), this protein is GTPase-activating protein and VPS9 domain-containing protein 1 (GAPVD1).